Here is a 575-residue protein sequence, read N- to C-terminus: Proline--tRNA ligase (575 aa).

This sequence belongs to the class-II aminoacyl-tRNA synthetase family. ProS type 1 subfamily. In terms of assembly, homodimer.

The protein localises to the cytoplasm. The enzyme catalyses tRNA(Pro) + L-proline + ATP = L-prolyl-tRNA(Pro) + AMP + diphosphate. Its function is as follows. Catalyzes the attachment of proline to tRNA(Pro) in a two-step reaction: proline is first activated by ATP to form Pro-AMP and then transferred to the acceptor end of tRNA(Pro). As ProRS can inadvertently accommodate and process non-cognate amino acids such as alanine and cysteine, to avoid such errors it has two additional distinct editing activities against alanine. One activity is designated as 'pretransfer' editing and involves the tRNA(Pro)-independent hydrolysis of activated Ala-AMP. The other activity is designated 'posttransfer' editing and involves deacylation of mischarged Ala-tRNA(Pro). The misacylated Cys-tRNA(Pro) is not edited by ProRS. The sequence is that of Proline--tRNA ligase from Pseudothermotoga lettingae (strain ATCC BAA-301 / DSM 14385 / NBRC 107922 / TMO) (Thermotoga lettingae).